We begin with the raw amino-acid sequence, 490 residues long: Protein twist (490 aa).

Disordered stretches follow at residues 48-72 (QLQHQQQHLHSHQHHQQHHQQQHAQ), 96-165 (PSNE…TGGS), and 244-264 (QQQQSQQLQQQQPHQQSHAQM). A compositionally biased stretch (basic residues) spans 54 to 68 (QHLHSHQHHQQHHQQ). 2 stretches are compositionally biased toward low complexity: residues 102–134 (STSSNQSAQSTSLELNNNNTSSNTNSSGNNPSG) and 244–263 (QQQQSQQLQQQQPHQQSHAQ). Residues Ser-325 and Ser-328 each carry the phosphoserine modification. The interval 330–361 (LDGSDAGGKAFRKPRRRLKRKPSKTEETDEFS) is disordered. Positions 339-351 (AFRKPRRRLKRKP) are enriched in basic residues. The bHLH domain maps to 362 to 413 (NQRVMANVRERQRTQSLNDAFKSLQQIIPTLPSDKLSKIQTLKLATRYIDFL).

As to quaternary structure, efficient DNA binding requires dimerization with another bHLH protein. Homodimer. Interacts with akirin. Expressed in embryonic abdomen; a single cell ventrally, pairs of cells laterally and three cells dorsally in each hemisegment. In the thorax, there are patches of cells associated with the imaginal disks. During larval development, cells proliferate and, in the abdomen, they form ventral, lateral and dorsal clusters, which are the precursors of the adult abdominal muscles. In the thorax, they form populations of cells in the imaginal disks that correspond to the adepithelial cells.

The protein localises to the nucleus. Its function is as follows. Involved in the establishment and dorsoventral patterning of germ layers in the embryo. This Drosophila melanogaster (Fruit fly) protein is Protein twist (twi).